We begin with the raw amino-acid sequence, 422 residues long: UPF0761 membrane protein XAC0937 (422 aa).

Transmembrane regions (helical) follow at residues 45-65, 102-122, 151-171, 179-199, 213-233, and 247-267; these read VFAL…FPAF, FTVA…HSIE, GTML…LPLF, LAEF…IVLI, ALPG…GFGF, and ALSA…SVLL.

Belongs to the UPF0761 family.

Its subcellular location is the cell inner membrane. The sequence is that of UPF0761 membrane protein XAC0937 from Xanthomonas axonopodis pv. citri (strain 306).